The following is a 333-amino-acid chain: Electron transfer flavoprotein subunit alpha, mitochondrial (333 aa).

Residues 1–19 (MFRAAAPGQLRRAASLLRF) constitute a mitochondrion transit peptide. Residues 20 to 204 (QSTLVIAEHA…EISEWLDQKL (185 aa)) form a domain I region. An N6-acetyllysine; alternate modification is found at Lys59. Lys59 is modified (N6-succinyllysine; alternate). Residue Lys62 is modified to N6-acetyllysine. The residue at position 69 (Lys69) is an N6-acetyllysine; alternate. The residue at position 69 (Lys69) is an N6-succinyllysine; alternate. Lys75 is subject to N6-acetyllysine. A Phosphothreonine modification is found at Thr93. 2 positions are modified to N6-acetyllysine: Lys101 and Lys139. The residue at position 140 (Ser140) is a Phosphoserine. Position 158 is an N6-acetyllysine; alternate (Lys158). N6-succinyllysine; alternate is present on Lys158. Lys164 is modified (N6-acetyllysine). Lys187 bears the N6-succinyllysine mark. Lys203 bears the N6-acetyllysine; alternate mark. Residue Lys203 is modified to N6-succinyllysine; alternate. The segment at 205 to 333 (TKSDRPELTG…PEMTEILKKK (129 aa)) is domain II. The residue at position 216 (Lys216) is an N6-succinyllysine. Arg223 lines the FAD pocket. N6-acetyllysine; alternate occurs at positions 226 and 232. N6-succinyllysine; alternate occurs at positions 226 and 232. FAD contacts are provided by residues Ser248, 263 to 266 (VGQT), 281 to 286 (SGAIQH), and Asn300. Lys301 bears the N6-succinyllysine mark. 318–319 (DL) serves as a coordination point for FAD.

Belongs to the ETF alpha-subunit/FixB family. As to quaternary structure, heterodimer composed of ETFA and ETFB. Identified in a complex that contains ETFA, ETFB and ETFRF1. Interaction with ETFRF1 promotes dissociation of the bound FAD and loss of electron transfer activity. Interacts with TASOR. FAD is required as a cofactor.

It is found in the mitochondrion matrix. Functionally, heterodimeric electron transfer flavoprotein that accepts electrons from several mitochondrial dehydrogenases, including acyl-CoA dehydrogenases, glutaryl-CoA and sarcosine dehydrogenase. It transfers the electrons to the main mitochondrial respiratory chain via ETF-ubiquinone oxidoreductase (ETF dehydrogenase). Required for normal mitochondrial fatty acid oxidation and normal amino acid metabolism. The polypeptide is Electron transfer flavoprotein subunit alpha, mitochondrial (ETFA) (Pongo abelii (Sumatran orangutan)).